The sequence spans 427 residues: MASFPESVNENDIDKAKFIGELLVPMAPFDQKAGREAWTVAFAPDGSYFAWSQGHRIVRLIPWAKCLSSFSVRHGGEVTNPTSPRHLSRQSCKGGSVIPMAGAPPEHTIDCGGIVWGMAFGSSVPEKQSRSINIEWHHFQFGRDQLLLATGLNNGRIKIWDVYTGTLLLNLMDHTDIVRDLTFAPDGSLMLVSASTDKKLRVWDLKDDGNMVKVLWGHPNRVYSSAFSPDSSVLCSVGASKAVLLWNMDKYTLIRKLEGHHNDVVSCEFSPDGALLATASYDTRVIVWDHQRGSILLELGHLFPPPSPIFAGGANDRWVRSVSFCADGRHIASVSDDRLVRFWSIEERAPQAVASLPNGLCCAFSTTGSVLAAGTCDGSVHFWECPRSIASLQHLCRMALRRVKTTQQVEALPVPMPLRDFLTYRVV.

WD repeat units follow at residues 129–170 (SRSI…LLLN), 173–213 (DHTD…NMVK), 217–256 (GHPN…LIRK), 259–298 (GHHN…ILLE), and 314–353 (ANDR…PQAV). Positions 379–427 (SVHFWECPRSIASLQHLCRMALRRVKTTQQVEALPVPMPLRDFLTYRVV) constitute an SOCS box domain.

Component of a probable ECS E3 ubiquitin-protein ligase complex that contains the Elongin BC complex.

The protein operates within protein modification; protein ubiquitination. Probable substrate-recognition component of a SCF-like ECS (Elongin-Cullin-SOCS-box protein) E3 ubiquitin-protein ligase complex which mediates the ubiquitination and subsequent proteasomal degradation of target proteins. The protein is WD repeat and SOCS box-containing protein 1 (wsb1) of Takifugu rubripes (Japanese pufferfish).